The chain runs to 475 residues: Ribulose bisphosphate carboxylase large chain (475 aa).

Residues 1–2 (MS) constitute a propeptide that is removed on maturation. Position 3 is an N-acetylproline (proline 3). N6,N6,N6-trimethyllysine is present on lysine 14. Positions 123 and 173 each coordinate substrate. The active-site Proton acceptor is lysine 175. Substrate is bound at residue lysine 177. Residues lysine 201, aspartate 203, and glutamate 204 each coordinate Mg(2+). An N6-carboxylysine modification is found at lysine 201. Histidine 294 acts as the Proton acceptor in catalysis. Substrate contacts are provided by arginine 295, histidine 327, and serine 379.

This sequence belongs to the RuBisCO large chain family. Type I subfamily. As to quaternary structure, heterohexadecamer of 8 large chains and 8 small chains; disulfide-linked. The disulfide link is formed within the large subunit homodimers. Mg(2+) serves as cofactor. Post-translationally, the disulfide bond which can form in the large chain dimeric partners within the hexadecamer appears to be associated with oxidative stress and protein turnover.

Its subcellular location is the plastid. It localises to the chloroplast. The catalysed reaction is 2 (2R)-3-phosphoglycerate + 2 H(+) = D-ribulose 1,5-bisphosphate + CO2 + H2O. It carries out the reaction D-ribulose 1,5-bisphosphate + O2 = 2-phosphoglycolate + (2R)-3-phosphoglycerate + 2 H(+). RuBisCO catalyzes two reactions: the carboxylation of D-ribulose 1,5-bisphosphate, the primary event in carbon dioxide fixation, as well as the oxidative fragmentation of the pentose substrate in the photorespiration process. Both reactions occur simultaneously and in competition at the same active site. The protein is Ribulose bisphosphate carboxylase large chain of Physcomitrium patens (Spreading-leaved earth moss).